Reading from the N-terminus, the 562-residue chain is Protoporphyrinogen oxidase 1, chloroplastic (562 aa).

The N-terminal 48 residues, 1 to 48 (MSAMALSSTMALSLPQSSMSLSHCRHNRITILIPSSSLRRRGGSSIRC), are a transit peptide targeting the chloroplast. Residues 88–93 (GGGISG), 115–116 (EA), and 137–140 (GPNS) each bind FAD. Residues 274–302 (TLKTIQERKDNPKPPRDPRLPKPKGQTVG) form a disordered region. Basic and acidic residues predominate over residues 278-293 (IQERKDNPKPPRDPRL). Residues Val323 and 536–538 (VAL) contribute to the FAD site.

The protein belongs to the protoporphyrinogen/coproporphyrinogen oxidase family. Protoporphyrinogen oxidase subfamily. It depends on FAD as a cofactor.

The protein localises to the plastid. It is found in the chloroplast thylakoid membrane. The protein resides in the chloroplast inner membrane. It carries out the reaction protoporphyrinogen IX + 3 O2 = protoporphyrin IX + 3 H2O2. It functions in the pathway porphyrin-containing compound metabolism; protoporphyrin-IX biosynthesis; protoporphyrin-IX from protoporphyrinogen-IX: step 1/1. It participates in porphyrin-containing compound metabolism; chlorophyll biosynthesis. Its function is as follows. Catalyzes the 6-electron oxidation of protoporphyrinogen-IX to form protoporphyrin-IX. The chain is Protoporphyrinogen oxidase 1, chloroplastic from Spinacia oleracea (Spinach).